The sequence spans 337 residues: Monoacylglycerol lipase abhd6-A (337 aa).

Residues 1-19 (MDLDVLNMFLVAGGTLLVP) are Extracellular-facing. The chain crosses the membrane as a helical; Signal-anchor for type II membrane protein span at residues 20 to 42 (ILAFVTSFLLWPAALIKIYYWYW). The Cytoplasmic segment spans residues 43 to 337 (RRALGMQVKF…QSTENNKKHE (295 aa)). The 241-residue stretch at 73–313 (SVLMLHGFSA…CGHSVVMERP (241 aa)) folds into the AB hydrolase-1 domain. S148 acts as the Nucleophile in catalysis. Catalysis depends on charge relay system residues D278 and H306.

The protein belongs to the AB hydrolase superfamily.

It localises to the late endosome membrane. It is found in the lysosome membrane. Its subcellular location is the mitochondrion membrane. It carries out the reaction Hydrolyzes glycerol monoesters of long-chain fatty acids.. The catalysed reaction is 1-octanoylglycerol + H2O = octanoate + glycerol + H(+). The enzyme catalyses 1-decanoylglycerol + H2O = decanoate + glycerol + H(+). It catalyses the reaction 1-dodecanoylglycerol + H2O = dodecanoate + glycerol + H(+). It carries out the reaction 1-tetradecanoylglycerol + H2O = tetradecanoate + glycerol + H(+). The catalysed reaction is 2-hexadecanoylglycerol + H2O = glycerol + hexadecanoate + H(+). The enzyme catalyses 2-(9Z-octadecenoyl)-glycerol + H2O = glycerol + (9Z)-octadecenoate + H(+). It catalyses the reaction 1-(9Z-octadecenoyl)-glycerol + H2O = glycerol + (9Z)-octadecenoate + H(+). It carries out the reaction 2-(9Z,12Z-octadecadienoyl)-glycerol + H2O = (9Z,12Z)-octadecadienoate + glycerol + H(+). The catalysed reaction is 2-(5Z,8Z,11Z,14Z-eicosatetraenoyl)-glycerol + H2O = glycerol + (5Z,8Z,11Z,14Z)-eicosatetraenoate + H(+). The enzyme catalyses 1-(5Z,8Z,11Z,14Z-eicosatetraenoyl)-glycerol + H2O = glycerol + (5Z,8Z,11Z,14Z)-eicosatetraenoate + H(+). It catalyses the reaction 1-(9Z,12Z-octadecadienoyl)-glycerol + H2O = (9Z,12Z)-octadecadienoate + glycerol + H(+). It carries out the reaction 3-(9Z-octadecenoyl)-sn-glycero-1-phospho-(3'-(9Z-octadecenoyl)-1'-sn-glycerol) + H2O = 3-(9Z-octadecenoyl)-sn-glycero-1-phospho-(1'-sn-glycerol) + (9Z)-octadecenoate + H(+). The catalysed reaction is (S,S)-2-(9Z-octadecenoyl)-sn-glycero-1-phospho-(2'-(9Z-octadecenoyl)-1'-sn-glycerol) + H2O = (S,S)-2-(9Z-octadecenoyl)-sn-glycero-1-phospho-(1'-sn-glycerol) + (9Z)-octadecenoate + H(+). The enzyme catalyses (R,R)-2-(9Z-octadecenoyl)-sn-glycero-3-phospho-(2'-(9Z-octadecenoyl)-3'-sn-glycerol) + H2O = (R,R)-2-(9Z-octadecenoyl)-sn-glycero-3-phospho-(3'-sn-glycerol) + (9Z)-octadecenoate + H(+). In terms of biological role, lipase that preferentially hydrolysis medium-chain saturated monoacylglycerols including 2-arachidonoylglycerol. Through 2-arachidonoylglycerol degradation may regulate endocannabinoid signaling pathways. Also has a lysophosphatidyl lipase activity with a preference for lysophosphatidylglycerol among other lysophospholipids. Also able to degrade bis(monoacylglycero)phosphate (BMP) and constitutes the major enzyme for BMP catabolism. BMP, also known as lysobisphosphatidic acid, is enriched in late endosomes and lysosomes and plays a key role in the formation of intraluminal vesicles and in lipid sorting. This is Monoacylglycerol lipase abhd6-A (abhd6-a) from Xenopus laevis (African clawed frog).